Consider the following 170-residue polypeptide: Putative phosphoesterase OB1230 (170 aa).

Histidine 34 functions as the Proton donor in the catalytic mechanism. Short sequence motifs (HXTX) lie at residues 34 to 37 (HLTL) and 115 to 118 (HITI). Histidine 115 acts as the Proton acceptor in catalysis.

This sequence belongs to the 2H phosphoesterase superfamily. YjcG family.

This is Putative phosphoesterase OB1230 from Oceanobacillus iheyensis (strain DSM 14371 / CIP 107618 / JCM 11309 / KCTC 3954 / HTE831).